Reading from the N-terminus, the 481-residue chain is ATP synthase subunit beta, plastid (481 aa).

162–169 serves as a coordination point for ATP; it reads GGAGVGKT.

Belongs to the ATPase alpha/beta chains family. As to quaternary structure, F-type ATPases have 2 components, CF(1) - the catalytic core - and CF(0) - the membrane proton channel. CF(1) has five subunits: alpha(3), beta(3), gamma(1), delta(1), epsilon(1). CF(0) has four main subunits: a(1), b(1), b'(1) and c(9-12).

It is found in the plastid membrane. It carries out the reaction ATP + H2O + 4 H(+)(in) = ADP + phosphate + 5 H(+)(out). Functionally, produces ATP from ADP in the presence of a proton gradient across the membrane. The catalytic sites are hosted primarily by the beta subunits. The chain is ATP synthase subunit beta, plastid (atpB) from Prototheca wickerhamii.